The chain runs to 74 residues: DNA-directed RNA polymerase subunit omega (74 aa).

Belongs to the RNA polymerase subunit omega family. In terms of assembly, the RNAP catalytic core consists of 2 alpha, 1 beta, 1 beta' and 1 omega subunit. When a sigma factor is associated with the core the holoenzyme is formed, which can initiate transcription.

The enzyme catalyses RNA(n) + a ribonucleoside 5'-triphosphate = RNA(n+1) + diphosphate. Promotes RNA polymerase assembly. Latches the N- and C-terminal regions of the beta' subunit thereby facilitating its interaction with the beta and alpha subunits. The polypeptide is DNA-directed RNA polymerase subunit omega (Marinomonas sp. (strain MWYL1)).